The chain runs to 1177 residues: Topoisomerase 1-associated factor 1 (1177 aa).

Disordered regions lie at residues 575–597, 791–815, 874–1001, and 1021–1177; these read AKQA…EEDL, REAW…PVKS, LTEP…ADQE, and LLHG…SDSE. Residues 583–597 show a composition bias toward acidic residues; sequence IEGDDEEQASEEEDL. A compositionally biased stretch (basic and acidic residues) spans 791 to 803; sequence REAWESQEQHSEG. 2 stretches are compositionally biased toward acidic residues: residues 911 to 921 and 954 to 963; these read FGSDSEGDDNV and EEEEPDEEDL. Residues 981–991 show a composition bias toward basic and acidic residues; sequence IKSDLYIHASD. The span at 1086–1096 shows a compositional bias: polar residues; sequence SLGQGSPSLQG. Composition is skewed to acidic residues over residues 1108–1118 and 1146–1155; these read EENELDFDDDL and TIDEDDDDEA.

Belongs to the timeless family. As to quaternary structure, component of the fork protection complex (FPC) consisting of tof1 and csm3.

The protein resides in the nucleus. Its function is as follows. Forms a fork protection complex (FPC) with csm3 and which is required for chromosome segregation during meiosis and DNA damage repair. FPC coordinates leading and lagging strand synthesis and moves with the replication fork. FPC stabilizes replication forks in a configuration that is recognized by replication checkpoint sensors. This chain is Topoisomerase 1-associated factor 1 (tof1), found in Neosartorya fischeri (strain ATCC 1020 / DSM 3700 / CBS 544.65 / FGSC A1164 / JCM 1740 / NRRL 181 / WB 181) (Aspergillus fischerianus).